A 478-amino-acid polypeptide reads, in one-letter code: Glutamine synthetase (478 aa).

In terms of domain architecture, GS beta-grasp spans 16–100 (EKVEYVDVRF…INFFVHDPFT (85 aa)). The GS catalytic domain occupies 108–478 (PRNIARKAEN…PYEFALYYDV (371 aa)). Mg(2+) contacts are provided by Glu133 and Glu135. Glu214 contributes to the ATP binding site. Mg(2+)-binding residues include Glu219 and Glu227. 230–232 (YQF) is a binding site for ATP. L-glutamate-binding positions include 271–272 (NG) and Gly272. Mg(2+) is bound at residue His276. Residues 278–280 (HQS) and Ser280 each bind ATP. L-glutamate is bound by residues Arg329, Glu335, and Arg347. 3 residues coordinate ATP: Arg347, Arg352, and Lys361. Glu366 contributes to the Mg(2+) binding site. Position 368 (Arg368) interacts with L-glutamate. An O-AMP-tyrosine modification is found at Tyr406.

This sequence belongs to the glutamine synthetase family. Oligomer of 12 subunits arranged in the form of two hexagons. Requires Mg(2+) as cofactor.

The protein resides in the cytoplasm. The enzyme catalyses L-glutamate + NH4(+) + ATP = L-glutamine + ADP + phosphate + H(+). When cellular nitrogen levels are high, the C-terminal adenylyl transferase (AT) of GlnE inhibits GlnA by covalent transfer of an adenylyl group from ATP to Tyr-406. Conversely, when nitrogen levels are low, the N-terminal adenylyl removase (AR) of GlnE activates GlnA by removing the adenylyl group by phosphorolysis. The fully adenylated enzyme complex is inactive. Its function is as follows. Involved in nitrogen metabolism via ammonium assimilation. Catalyzes the ATP-dependent biosynthesis of glutamine from glutamate and ammonia. Also plays a key role in controlling the ammonia levels within infected host cells and so contributes to the pathogens capacity to inhibit phagosome acidification and phagosome-lysosome fusion. Involved in cell wall biosynthesis via the production of the major component poly-L-glutamine (PLG). PLG synthesis in the cell wall occurs only in nitrogen limiting conditions and on the contrary high nitrogen conditions inhibit PLG synthesis. This chain is Glutamine synthetase, found in Mycobacterium bovis (strain ATCC BAA-935 / AF2122/97).